The sequence spans 1138 residues: MNLNNLGGYEDSNRTLNNSLNYPTQKALSPSLKNMNYQDFLSITEREQPEALASGNTAINTVVSVTGATLSALGVPGASFITNFYLKITGLLWPHNKNIWDEFMTEVETLIEQKIEQYARNKALAELEGLGNNLTIYQQALEDWLNNPDDPATITRVIDRFRILDALFESYMPSFRVAGYEIPLLTVYAQAANLHLALLRDSTLYGDKWGFTQNNIEENYNRQKKHISEYSNHCVKWYNSGLSRLNGSTYEQWINYNRFRREMILMVLDIAAVFPIYDPRMYSMETSTQLTREVYTDPISLSISNPDIGPSFSQMENTAFRTPHLVDYLDELYIYTSKYKAFSHEIQPDLFYWCVHKVSFKKSEQSNLYTTGIYGKTSGYISSGAYSFRGNDIYRTLAAPSVVVYPYTQNYGVEQVEFYGVKGHVHYRGDNKYDLTYDSIDQLPPDGEPIHEKYTHRLCHATAISKSTPDYDNATIPIFSWTHRSAEYYNRIYPNKIKKIPAVKMYKLDDLSTVVKGPGFTGGDLVKRGSNGYIGDIKATVNSPLSQKYRVRVRYATSVSGLFNVFINDEIALQKNFQSTVETIGEGKDLTYGSFGYIEYSTTIQFPNEHPKITLHLNHLSNNSPFYVDSIEFIPVDVNYDEKEKLEKAQKAVNTLFTEGRNALQKYVTDYKVDQVSILVDCISGDLYPNEKRELQNLVKYAKRLSYSRNLLLDPTFDSINSSEENGWYGSNGIVIGNGDFVFKGNYLIFSGTNDTQYPTYLYQKIDESKLKEYSRYKLKGFIESSQDLEAYVIRYDAKHRTLDVSDNLLPDILPENTCGEPNRCAAQQYLDENPSSECSSMQDGILSDSHSFSLNIDTGSINHNENLGIWVLFKISTLEGYAKFGNLEVIEDGPVIGEALARVKRQETKWRNKLAQMTTETQAIYTRAKQALDNLFANAQDSHLKIDVTFAEIAAARKIVQSIREVYMSWLSVVPGVNHPIFTELSGRVQRAFQLYDVRNVVRNGRFLNGLSDWIVTSDVNVQEENGNNVLVLNNWDAQVLRNVKLYQDRGYVLRVTARKIGIGEGYITITDEEGHTDQLRFTACEEIDASNAFISGYITKELEFFPDTEKVHIEIGETEGIFLVESIELFLMEELC.

It belongs to the delta endotoxin family.

Promotes colloidosmotic lysis by binding to the midgut epithelial cells of Coleoptera. In Bacillus thuringiensis subsp. dakota, this protein is Pesticidal crystal protein Cry7Ab (cry7Ab).